A 351-amino-acid chain; its full sequence is Dihydroorotate dehydrogenase (quinone) (351 aa).

Residues 61 to 65 (AGLDK) and T85 each bind FMN. K65 is a binding site for substrate. Substrate is bound at residue 110–114 (NRMGF). The FMN site is built by N139 and N172. N172 contributes to the substrate binding site. The Nucleophile role is filled by S175. N177 contacts substrate. K217 and T245 together coordinate FMN. 246–247 (NT) lines the substrate pocket. Residues G268, G297, and 318-319 (YS) contribute to the FMN site.

The protein belongs to the dihydroorotate dehydrogenase family. Type 2 subfamily. As to quaternary structure, monomer. FMN is required as a cofactor.

The protein resides in the cell membrane. It catalyses the reaction (S)-dihydroorotate + a quinone = orotate + a quinol. It functions in the pathway pyrimidine metabolism; UMP biosynthesis via de novo pathway; orotate from (S)-dihydroorotate (quinone route): step 1/1. Catalyzes the conversion of dihydroorotate to orotate with quinone as electron acceptor. In Stenotrophomonas maltophilia (strain R551-3), this protein is Dihydroorotate dehydrogenase (quinone).